A 514-amino-acid chain; its full sequence is Bifunctional purine biosynthesis protein PurH (514 aa).

Residues 1–142 (MLALLSVSDK…KNFRHVSVVV (142 aa)) enclose the MGS-like domain.

This sequence belongs to the PurH family.

The enzyme catalyses (6R)-10-formyltetrahydrofolate + 5-amino-1-(5-phospho-beta-D-ribosyl)imidazole-4-carboxamide = 5-formamido-1-(5-phospho-D-ribosyl)imidazole-4-carboxamide + (6S)-5,6,7,8-tetrahydrofolate. The catalysed reaction is IMP + H2O = 5-formamido-1-(5-phospho-D-ribosyl)imidazole-4-carboxamide. The protein operates within purine metabolism; IMP biosynthesis via de novo pathway; 5-formamido-1-(5-phospho-D-ribosyl)imidazole-4-carboxamide from 5-amino-1-(5-phospho-D-ribosyl)imidazole-4-carboxamide (10-formyl THF route): step 1/1. Its pathway is purine metabolism; IMP biosynthesis via de novo pathway; IMP from 5-formamido-1-(5-phospho-D-ribosyl)imidazole-4-carboxamide: step 1/1. This is Bifunctional purine biosynthesis protein PurH from Myxococcus xanthus (strain DK1622).